The following is a 651-amino-acid chain: Histone-lysine N-methyltransferase family member SUVH2 (651 aa).

Residues 1–28 are disordered; sequence MSTLLPFPDLNLMPDSQSSTAGTTAGDT. Low complexity predominate over residues 15–28; it reads DSQSSTAGTTAGDT. The YDG domain maps to 202–358; sequence DKHIVGPVTG…KFRLVRIEGQ (157 aa). The region spanning 434–492 is the Pre-SET domain; that stretch reads TGCECKLSCTDDCLCARKNGGEFAYDDNGHLLKGKHVVFECGEFCTCGPSCKSRVTQKG. 9 residues coordinate Zn(2+): cysteine 436, cysteine 438, cysteine 442, cysteine 446, cysteine 448, cysteine 474, cysteine 478, cysteine 480, and cysteine 484. In terms of domain architecture, SET spans 495–638; the sequence is NRLEVFRSKE…PLAELSLDYG (144 aa).

The protein belongs to the class V-like SAM-binding methyltransferase superfamily. Histone-lysine methyltransferase family. Suvar3-9 subfamily. Self-interacts. Interacts with DNA-directed RNA polymerase V subunit NRPE1 and with DRD1 and DMS3. Binds to MORC1/CRT1. In terms of tissue distribution, expressed at low levels in leaves stems and flowers.

It localises to the nucleus. Its subcellular location is the chromosome. The protein resides in the centromere. In terms of biological role, histone methyltransferase family member that plays a central role in gene silencing. Together with MORC6 and SUVH9, regulates the silencing of some transposable elements (TEs). According to PubMed:15775980, it is required for normal methylation of 'Lys-9' and 'Lys-27' of histone H3, 'Lys-20' of H4, and cytosine, but PubMed:19043555 see no significant effect on histone methylation when the gene is mutated. According to PubMed:19043555, the protein does not bind S-adenosyl-L-methionine and lacks methyltransferase activity. Instead, it may function downstream of DRM2 in RNA-directed DNA methylation, binding to methylated DNA and recruiting DNA-directed RNA polymerase V to chromatin. In Arabidopsis thaliana (Mouse-ear cress), this protein is Histone-lysine N-methyltransferase family member SUVH2 (SUVH2).